A 342-amino-acid polypeptide reads, in one-letter code: Galactose mutarotase (342 aa).

Residues 81–82 (NR) and H107 each bind beta-D-galactose. Position 124 is a phosphoserine (S124). H176 serves as the catalytic Proton donor. Residues 176 to 178 (HSY), D243, Q279, and E307 each bind beta-D-galactose. E307 (proton acceptor) is an active-site residue.

This sequence belongs to the aldose epimerase family. In terms of assembly, monomer.

The protein localises to the cytoplasm. The catalysed reaction is alpha-D-galactose = beta-D-galactose. The enzyme catalyses alpha-D-glucose = beta-D-glucose. Its pathway is carbohydrate metabolism; hexose metabolism. It functions in the pathway carbohydrate metabolism; galactose metabolism. Its function is as follows. Mutarotase that catalyzes the interconversion of beta-D-galactose and alpha-D-galactose during galactose metabolism. Beta-D-galactose is metabolized in the liver into glucose 1-phosphate, the primary metabolic fuel, by the action of four enzymes that constitute the Leloir pathway: GALM, GALK1 (galactokinase), GALT (galactose-1-phosphate uridylyltransferase) and GALE (UDP-galactose-4'-epimerase). Involved in the maintenance of the equilibrium between the beta- and alpha-anomers of galactose, therefore ensuring a sufficient supply of the alpha-anomer for GALK1. Also active on D-glucose although shows a preference for galactose over glucose. In Bos taurus (Bovine), this protein is Galactose mutarotase (GALM).